The sequence spans 258 residues: Imidazole glycerol phosphate synthase subunit HisF (258 aa).

Active-site residues include Asp12 and Asp131.

Belongs to the HisA/HisF family. Heterodimer of HisH and HisF.

Its subcellular location is the cytoplasm. It catalyses the reaction 5-[(5-phospho-1-deoxy-D-ribulos-1-ylimino)methylamino]-1-(5-phospho-beta-D-ribosyl)imidazole-4-carboxamide + L-glutamine = D-erythro-1-(imidazol-4-yl)glycerol 3-phosphate + 5-amino-1-(5-phospho-beta-D-ribosyl)imidazole-4-carboxamide + L-glutamate + H(+). Its pathway is amino-acid biosynthesis; L-histidine biosynthesis; L-histidine from 5-phospho-alpha-D-ribose 1-diphosphate: step 5/9. Functionally, IGPS catalyzes the conversion of PRFAR and glutamine to IGP, AICAR and glutamate. The HisF subunit catalyzes the cyclization activity that produces IGP and AICAR from PRFAR using the ammonia provided by the HisH subunit. In Nitrosomonas europaea (strain ATCC 19718 / CIP 103999 / KCTC 2705 / NBRC 14298), this protein is Imidazole glycerol phosphate synthase subunit HisF.